Consider the following 175-residue polypeptide: Protein-export protein SecB (175 aa).

The tract at residues 154 to 175 (QQGGNNNGSDSGIILPPGTTRQ) is disordered.

Belongs to the SecB family. As to quaternary structure, homotetramer, a dimer of dimers. One homotetramer interacts with 1 SecA dimer.

The protein resides in the cytoplasm. Its function is as follows. One of the proteins required for the normal export of preproteins out of the cell cytoplasm. It is a molecular chaperone that binds to a subset of precursor proteins, maintaining them in a translocation-competent state. It also specifically binds to its receptor SecA. The sequence is that of Protein-export protein SecB from Bordetella petrii (strain ATCC BAA-461 / DSM 12804 / CCUG 43448).